The chain runs to 361 residues: Ribosomal RNA large subunit methyltransferase M (361 aa).

S-adenosyl-L-methionine-binding positions include Ser193, 226-229 (CPGG), Asp245, Asp265, and Asp283. Catalysis depends on Lys312, which acts as the Proton acceptor.

It belongs to the class I-like SAM-binding methyltransferase superfamily. RNA methyltransferase RlmE family. RlmM subfamily. Monomer.

The protein resides in the cytoplasm. The enzyme catalyses cytidine(2498) in 23S rRNA + S-adenosyl-L-methionine = 2'-O-methylcytidine(2498) in 23S rRNA + S-adenosyl-L-homocysteine + H(+). Catalyzes the 2'-O-methylation at nucleotide C2498 in 23S rRNA. This Histophilus somni (strain 129Pt) (Haemophilus somnus) protein is Ribosomal RNA large subunit methyltransferase M.